A 325-amino-acid polypeptide reads, in one-letter code: Deoxyhypusine hydroxylase (325 aa).

Ser2 carries the post-translational modification N-acetylserine. HEAT-like PBS-type repeat units lie at residues 77–103 and 110–136; these read LKHE…VMLD and VRHE…AAKE. Fe cation contacts are provided by His79, Glu80, His112, and Glu113. At Ser126 the chain carries Phosphoserine. Thr187 is subject to Phosphothreonine. 3 HEAT-like PBS-type repeats span residues 202 to 231, 235 to 261, and 268 to 294; these read LFQR…FSAE, FKHE…VLGR, and VRHE…YLND. His237, Glu238, His270, and Glu271 together coordinate Fe cation. Ser281 carries the post-translational modification Phosphoserine.

It belongs to the deoxyhypusine hydroxylase family. It depends on Fe(2+) as a cofactor.

It localises to the cytoplasm. It is found in the nucleus. The catalysed reaction is [eIF5A protein]-deoxyhypusine + AH2 + O2 = [eIF5A protein]-hypusine + A + H2O. The protein operates within protein modification; eIF5A hypusination. Functionally, catalyzes the hydroxylation of the N(6)-(4-aminobutyl)-L-lysine intermediate to form hypusine, an essential post-translational modification only found in mature eIF-5A factor. The protein is Deoxyhypusine hydroxylase of Saccharomyces cerevisiae (strain ATCC 204508 / S288c) (Baker's yeast).